Consider the following 925-residue polypeptide: Nuclear pore complex protein Nup107 (925 aa).

An N-acetylmethionine modification is found at M1. Phosphoserine occurs at positions 4, 10, 11, and 37. Positions 20 to 66 (TRTARKQSAQKRVLLQASQDENFGNTTPRNQVIPRTPSSFRQPFTPT) are disordered. Polar residues-rich tracts occupy residues 35–49 (QASQDENFGNTTPRN) and 55–66 (TPSSFRQPFTPT). Phosphothreonine is present on residues T46 and T55. S57 and S58 each carry phosphoserine. Residue R60 is modified to Asymmetric dimethylarginine; alternate. R60 bears the Omega-N-methylarginine; alternate mark. At T64 the chain carries Phosphothreonine. An Omega-N-methylarginine modification is found at R68. Residues S69 and S86 each carry the phosphoserine modification.

Belongs to the nucleoporin Nup84/Nup107 family. Part of the nuclear pore complex (NPC). Forms part of the Nup160 subcomplex in the nuclear pore which is composed of NUP160, NUP133, NUP107 and Nup96; this complex plays a role in RNA export and in tethering Nup98 and NUP153 to the nucleus. Does not interact with TPR. Interacts with ZNF106. In terms of tissue distribution, ubiquitously expressed in fetal and adult tissues.

It is found in the nucleus membrane. It localises to the nucleus. The protein resides in the nuclear pore complex. The protein localises to the chromosome. Its subcellular location is the centromere. It is found in the kinetochore. Functionally, plays a role in the nuclear pore complex (NPC) assembly and/or maintenance. Required for the assembly of peripheral proteins into the NPC. May anchor NUP62 to the NPC. Involved in nephrogenesis. The polypeptide is Nuclear pore complex protein Nup107 (NUP107) (Homo sapiens (Human)).